Reading from the N-terminus, the 198-residue chain is Putative 3-methyladenine DNA glycosylase (198 aa).

Belongs to the DNA glycosylase MPG family.

The chain is Putative 3-methyladenine DNA glycosylase from Rhizobium johnstonii (strain DSM 114642 / LMG 32736 / 3841) (Rhizobium leguminosarum bv. viciae).